We begin with the raw amino-acid sequence, 257 residues long: Hydroxyacylglutathione hydrolase (257 aa).

Positions 54, 56, 58, 59, 113, 137, and 175 each coordinate Zn(2+).

It belongs to the metallo-beta-lactamase superfamily. Glyoxalase II family. Monomer. It depends on Zn(2+) as a cofactor.

It catalyses the reaction an S-(2-hydroxyacyl)glutathione + H2O = a 2-hydroxy carboxylate + glutathione + H(+). The protein operates within secondary metabolite metabolism; methylglyoxal degradation; (R)-lactate from methylglyoxal: step 2/2. Functionally, thiolesterase that catalyzes the hydrolysis of S-D-lactoyl-glutathione to form glutathione and D-lactic acid. The protein is Hydroxyacylglutathione hydrolase of Nostoc punctiforme (strain ATCC 29133 / PCC 73102).